The primary structure comprises 1162 residues: Protein OBERON 4 (1162 aa).

Basic and acidic residues-rich tracts occupy residues 1–19, 61–77, 90–99, and 118–134; these read MKRLRSSDDLDFCNDKNVD, NRDLDNHRPDARYHRSE, FRSERERPNR, and VDDRDRRLRDAERDRSL. Disordered regions lie at residues 1–235, 251–307, 321–346, and 441–485; these read MKRL…PSCS, IGKS…VSQN, DHRDGTITASANKITDTVDEKGDKDE, and SKTE…QSGV. The segment covering 135–146 has biased composition (polar residues); that stretch reads KSPSWSRDSPNE. Residues 148-157 are compositionally biased toward basic and acidic residues; that stretch reads SKFKPLDSRN. Polar residues predominate over residues 163–182; that stretch reads KSLASPTWSKDSGSEQSKSV. Positions 203 to 213 are enriched in acidic residues; it reads EMEEGELEPEP. Composition is skewed to basic and acidic residues over residues 225-235, 263-300, 336-346, and 441-457; these read TKHDCKLPSCS, SNRELSHVGGNREMETTDSMTDKKSVEDAENVPEHATE, DTVDEKGDKDE, and SKTEDLHDKDKDEKDDN. The segment at 835 to 899 adopts a PHD-type zinc-finger fold; that stretch reads ACMCLVCSNF…QFHCVACNHP (65 aa). The stretch at 1065 to 1161 forms a coiled coil; the sequence is MKQAEAEMFQ…KMEMTKQSLA (97 aa).

In terms of assembly, self-interacts. Interacts with OBE1 and OBE2. Interacts with OBE3.

The protein resides in the nucleus. Its function is as follows. Probable transcription factor that functions redundantly with OBE3 in specification of the hypophysis and establishment of the embryonic root. Involved in the activation of ARF5/MP-dependent gene expression during embryonic root meristem initiation. Involved in shoot meristem homeostasis. This Arabidopsis thaliana (Mouse-ear cress) protein is Protein OBERON 4.